The chain runs to 273 residues: WIMGHMVNAIAQIDEFVNLGANSIETDVSFDSSANPEYTYHGVPCDCGGTCTKWEHFNEFLKGLRKATTPGDSKYHEKLVLVVFDLKTGSLYDNQASDAGKKLAKSLLQNYWNNGNNGGRAYIVLSIPNLAHYKLITGFKEALTSEGHPELMDKVGYDFSGNDDIGDVANAYKKAGVTGHVWQSDGITNCLLRGLDRVRKAVANRDSSSGYINKVYYWTVDKRQSTRDALDAGVDGIMTNYPDVIADVLNESAYKAKFRIASYDDNPWETFKN.

Residue H5 is part of the active site. Residues E25 and D27 each coordinate Mg(2+). H41 acts as the Nucleophile in catalysis. Disulfide bonds link C45/C51 and C47/C190. Mg(2+) is bound at residue D85. N-linked (GlcNAc...) asparagine glycosylation is present at N250.

It belongs to the arthropod phospholipase D family. Class II subfamily. Requires Mg(2+) as cofactor. In terms of tissue distribution, expressed by the venom gland.

The protein localises to the secreted. It catalyses the reaction an N-(acyl)-sphingosylphosphocholine = an N-(acyl)-sphingosyl-1,3-cyclic phosphate + choline. The catalysed reaction is an N-(acyl)-sphingosylphosphoethanolamine = an N-(acyl)-sphingosyl-1,3-cyclic phosphate + ethanolamine. It carries out the reaction a 1-acyl-sn-glycero-3-phosphocholine = a 1-acyl-sn-glycero-2,3-cyclic phosphate + choline. The enzyme catalyses a 1-acyl-sn-glycero-3-phosphoethanolamine = a 1-acyl-sn-glycero-2,3-cyclic phosphate + ethanolamine. Its function is as follows. Dermonecrotic toxins cleave the phosphodiester linkage between the phosphate and headgroup of certain phospholipids (sphingolipid and lysolipid substrates), forming an alcohol (often choline) and a cyclic phosphate. This toxin acts on sphingomyelin (SM). It may also act on ceramide phosphoethanolamine (CPE), lysophosphatidylcholine (LPC) and lysophosphatidylethanolamine (LPE), but not on lysophosphatidylserine (LPS), and lysophosphatidylglycerol (LPG). It acts by transphosphatidylation, releasing exclusively cyclic phosphate products as second products. Induces dermonecrosis, hemolysis, increased vascular permeability, edema, inflammatory response, and platelet aggregation. The sequence is that of Dermonecrotic toxin LapSicTox-alphaIB1ai from Loxosceles apachea (Apache recluse spider).